We begin with the raw amino-acid sequence, 164 residues long: Lectin (164 aa).

The N-terminal stretch at 1–15 (TVATILTILASTCMA) is a signal peptide. The Bulb-type lectin domain maps to 16-125 (RNVLVNNEGL…DIWSTGTYRK (110 aa)). C44 and C68 form a disulfide bridge.

In terms of assembly, homotetramer. In terms of processing, not glycosylated.

Mannose-specific lectin. Induces a Th1-type immune response in vitro. Causes a 4-fold increase in the proliferation of murine thymocytes and a significant increase in the production of nitric oxide at 24 hours in a macrophage cell line. Stimulates the production of the pro-inflammatory cytokines TNF and IL12 by rat peritoneal macrophages in a dose-dependent manner and of the cytokines IFNG and IL2 in murine thymocytes. Has hemagglutination activity towards rabbit erythrocytes. This chain is Lectin, found in Allium cepa (Onion).